The sequence spans 409 residues: Arginine deiminase (409 aa).

Cysteine 399 serves as the catalytic Amidino-cysteine intermediate.

The protein belongs to the arginine deiminase family.

The protein localises to the cytoplasm. The enzyme catalyses L-arginine + H2O = L-citrulline + NH4(+). Its pathway is amino-acid degradation; L-arginine degradation via ADI pathway; carbamoyl phosphate from L-arginine: step 1/2. The protein is Arginine deiminase of Streptococcus pneumoniae (strain JJA).